We begin with the raw amino-acid sequence, 120 residues long: MNAEAIIRSIEAEQLKDDLPTIHVGDTVRVGVKIKEGTKERVQPYEGTVIAMRNGGINETITVRKIFQGIGVERVFLLHSPLVDNIKVIRRGKVRRAKLYYLRDRVGKATRIKQRFDRPI.

The protein belongs to the bacterial ribosomal protein bL19 family.

Its function is as follows. This protein is located at the 30S-50S ribosomal subunit interface and may play a role in the structure and function of the aminoacyl-tRNA binding site. This chain is Large ribosomal subunit protein bL19, found in Picosynechococcus sp. (strain ATCC 27264 / PCC 7002 / PR-6) (Agmenellum quadruplicatum).